A 404-amino-acid chain; its full sequence is 26S proteasome regulatory subunit 6A-B (404 aa).

Residue 192-199 (GPPGTGKT) participates in ATP binding.

The protein belongs to the AAA ATPase family. As to quaternary structure, may form a heterodimer with a related family member.

The protein localises to the cytoplasm. Its subcellular location is the nucleus. In terms of biological role, the 26S proteasome is involved in the ATP-dependent degradation of ubiquitinated proteins. The regulatory (or ATPase) complex confers ATP dependency and substrate specificity to the 26S complex. This Xenopus laevis (African clawed frog) protein is 26S proteasome regulatory subunit 6A-B (psmc3-b).